Consider the following 421-residue polypeptide: Trimethyllysine dioxygenase, mitochondrial (421 aa).

Residues 1-15 (MWYHKLLHQQSRLRN) constitute a mitochondrion transit peptide. An N6-acetyllysine mark is found at Lys179 and Lys236. Residues His242, Asp244, and His389 each contribute to the Fe cation site.

Belongs to the gamma-BBH/TMLD family. Homodimer. The cofactor is Fe(2+). Requires L-ascorbate as cofactor.

Its subcellular location is the mitochondrion matrix. The catalysed reaction is N(6),N(6),N(6)-trimethyl-L-lysine + 2-oxoglutarate + O2 = (3S)-3-hydroxy-N(6),N(6),N(6)-trimethyl-L-lysine + succinate + CO2. Its pathway is amine and polyamine biosynthesis; carnitine biosynthesis. In terms of biological role, converts trimethyllysine (TML) into hydroxytrimethyllysine (HTML). In Mus musculus (Mouse), this protein is Trimethyllysine dioxygenase, mitochondrial (Tmlhe).